The primary structure comprises 182 residues: Tropomyosin-like protein (182 aa).

Residues 1 to 68 (FDRYNQILDE…ELEQRRTEQQ (68 aa)) are a coiled coil. Positions 32-66 (DEETKKIKQEEAEMKKKIEGEASRKKLELEQRRTE) are enriched in basic and acidic residues. 2 disordered regions span residues 32–81 (DEET…GSTD) and 140–160 (DQPA…DAGL). The segment covering 140–153 (DQPAQAGPEPAAPA) has biased composition (low complexity).

Its subcellular location is the cytoplasm. It localises to the cytoskeleton. The sequence is that of Tropomyosin-like protein from Pichia angusta (Yeast).